A 422-amino-acid chain; its full sequence is UDP-N-acetylglucosamine 1-carboxyvinyltransferase (422 aa).

Residue 22–23 (KN) coordinates phosphoenolpyruvate. Arg-92 serves as a coordination point for UDP-N-acetyl-alpha-D-glucosamine. Cys-116 acts as the Proton donor in catalysis. Cys-116 is modified (2-(S-cysteinyl)pyruvic acid O-phosphothioketal). Residues 121 to 125 (RPVDL), Asp-307, and Leu-329 each bind UDP-N-acetyl-alpha-D-glucosamine.

Belongs to the EPSP synthase family. MurA subfamily.

The protein localises to the cytoplasm. The catalysed reaction is phosphoenolpyruvate + UDP-N-acetyl-alpha-D-glucosamine = UDP-N-acetyl-3-O-(1-carboxyvinyl)-alpha-D-glucosamine + phosphate. Its pathway is cell wall biogenesis; peptidoglycan biosynthesis. Functionally, cell wall formation. Adds enolpyruvyl to UDP-N-acetylglucosamine. This chain is UDP-N-acetylglucosamine 1-carboxyvinyltransferase, found in Aliarcobacter butzleri (strain RM4018) (Arcobacter butzleri).